Consider the following 134-residue polypeptide: Small ribosomal subunit protein uS8c (134 aa).

This sequence belongs to the universal ribosomal protein uS8 family. In terms of assembly, part of the 30S ribosomal subunit.

The protein localises to the plastid. The protein resides in the chloroplast. Its function is as follows. One of the primary rRNA binding proteins, it binds directly to 16S rRNA central domain where it helps coordinate assembly of the platform of the 30S subunit. In Capsella bursa-pastoris (Shepherd's purse), this protein is Small ribosomal subunit protein uS8c (rps8).